Here is a 484-residue protein sequence, read N- to C-terminus: ATP synthase subunit beta (484 aa).

162–169 serves as a coordination point for ATP; that stretch reads GGAGVGKT.

This sequence belongs to the ATPase alpha/beta chains family. As to quaternary structure, F-type ATPases have 2 components, CF(1) - the catalytic core - and CF(0) - the membrane proton channel. CF(1) has five subunits: alpha(3), beta(3), gamma(1), delta(1), epsilon(1). CF(0) has three main subunits: a(1), b(2) and c(9-12). The alpha and beta chains form an alternating ring which encloses part of the gamma chain. CF(1) is attached to CF(0) by a central stalk formed by the gamma and epsilon chains, while a peripheral stalk is formed by the delta and b chains.

It localises to the cell inner membrane. It carries out the reaction ATP + H2O + 4 H(+)(in) = ADP + phosphate + 5 H(+)(out). In terms of biological role, produces ATP from ADP in the presence of a proton gradient across the membrane. The catalytic sites are hosted primarily by the beta subunits. The protein is ATP synthase subunit beta of Agrobacterium fabrum (strain C58 / ATCC 33970) (Agrobacterium tumefaciens (strain C58)).